Consider the following 306-residue polypeptide: Methionyl-tRNA formyltransferase (306 aa).

110 to 113 (SLLP) is a binding site for (6S)-5,6,7,8-tetrahydrofolate.

Belongs to the Fmt family.

It catalyses the reaction L-methionyl-tRNA(fMet) + (6R)-10-formyltetrahydrofolate = N-formyl-L-methionyl-tRNA(fMet) + (6S)-5,6,7,8-tetrahydrofolate + H(+). Its function is as follows. Attaches a formyl group to the free amino group of methionyl-tRNA(fMet). The formyl group appears to play a dual role in the initiator identity of N-formylmethionyl-tRNA by promoting its recognition by IF2 and preventing the misappropriation of this tRNA by the elongation apparatus. This is Methionyl-tRNA formyltransferase from Brucella melitensis biotype 2 (strain ATCC 23457).